Reading from the N-terminus, the 418-residue chain is Tyrosine--tRNA ligase (418 aa).

Tyr34 contacts L-tyrosine. The 'HIGH' region motif lies at 39–48; the sequence is PTGDSMHIGH. Positions 166 and 170 each coordinate L-tyrosine. The 'KMSKS' region motif lies at 228-232; that stretch reads KFGKT. Lys231 provides a ligand contact to ATP. Positions 350–418 constitute an S4 RNA-binding domain; sequence QNIVLWLVDA…KKRYFLAHVK (69 aa).

It belongs to the class-I aminoacyl-tRNA synthetase family. TyrS type 1 subfamily. As to quaternary structure, homodimer.

It localises to the cytoplasm. It carries out the reaction tRNA(Tyr) + L-tyrosine + ATP = L-tyrosyl-tRNA(Tyr) + AMP + diphosphate + H(+). Functionally, catalyzes the attachment of tyrosine to tRNA(Tyr) in a two-step reaction: tyrosine is first activated by ATP to form Tyr-AMP and then transferred to the acceptor end of tRNA(Tyr). This is Tyrosine--tRNA ligase from Lactiplantibacillus plantarum (strain ATCC BAA-793 / NCIMB 8826 / WCFS1) (Lactobacillus plantarum).